Here is a 388-residue protein sequence, read N- to C-terminus: Succinate--CoA ligase [ADP-forming] subunit beta (388 aa).

An ATP-grasp domain is found at 9–244; it reads KSLFAEYGLP…PSQDDAREAH (236 aa). Residues lysine 46, 53-55, glutamate 99, threonine 102, and glutamate 107 contribute to the ATP site; that span reads GRG. Residues asparagine 199 and aspartate 213 each contribute to the Mg(2+) site. Substrate is bound by residues asparagine 264 and 321-323; that span reads GIV.

This sequence belongs to the succinate/malate CoA ligase beta subunit family. As to quaternary structure, heterotetramer of two alpha and two beta subunits. Requires Mg(2+) as cofactor.

The catalysed reaction is succinate + ATP + CoA = succinyl-CoA + ADP + phosphate. The enzyme catalyses GTP + succinate + CoA = succinyl-CoA + GDP + phosphate. Its pathway is carbohydrate metabolism; tricarboxylic acid cycle; succinate from succinyl-CoA (ligase route): step 1/1. Its function is as follows. Succinyl-CoA synthetase functions in the citric acid cycle (TCA), coupling the hydrolysis of succinyl-CoA to the synthesis of either ATP or GTP and thus represents the only step of substrate-level phosphorylation in the TCA. The beta subunit provides nucleotide specificity of the enzyme and binds the substrate succinate, while the binding sites for coenzyme A and phosphate are found in the alpha subunit. In Shewanella denitrificans (strain OS217 / ATCC BAA-1090 / DSM 15013), this protein is Succinate--CoA ligase [ADP-forming] subunit beta.